Here is an 82-residue protein sequence, read N- to C-terminus: Small ribosomal subunit protein bS16 (82 aa).

Belongs to the bacterial ribosomal protein bS16 family.

In Clostridium botulinum (strain Okra / Type B1), this protein is Small ribosomal subunit protein bS16.